The primary structure comprises 241 residues: MGLFESNLPKHIAVIMDGNGRWATSRGKSRSEGHREGAQAIDRLMDASLELGLKNISLYAFSTENWKRPVTEIRSIFSLLIEFIETRLDTIHKRGIRILHSGSRKKLTRGVLDKIDFAVDKTQKNKNLTVNFCLNYGSRDELLRAAQELFLERKRSKVALEKPLKEKEFEKFLYTSILPPVDLLIRTAGEQRLSNFLLWQSAYAELYFTDTLWPEFDKNSLVDSLKWYETRTRKFGGLTNG.

Residue Asp17 is part of the active site. Asp17 is a binding site for Mg(2+). Substrate is bound by residues Gly18–Arg21, Trp22, Arg30, His34, and Ser62–Glu64. Asn65 acts as the Proton acceptor in catalysis. Substrate is bound by residues Trp66, Arg68, Arg186, and Arg192 to Ser194. Glu205 contributes to the Mg(2+) binding site.

It belongs to the UPP synthase family. Homodimer. Mg(2+) is required as a cofactor.

Catalyzes the condensation of isopentenyl diphosphate (IPP) with allylic pyrophosphates generating different type of terpenoids. This is Isoprenyl transferase from Leptospira interrogans serogroup Icterohaemorrhagiae serovar copenhageni (strain Fiocruz L1-130).